Here is a 516-residue protein sequence, read N- to C-terminus: BAR/IMD domain-containing adapter protein 2-like 1 (516 aa).

The region spanning 1–249 (MSRGPEEVNR…MNMIEEIKTP (249 aa)) is the IMD domain. A coiled-coil region spans residues 115-148 (MNATLKRYQAEHRNKLDSLEKSQAELKKIRRKSQ). T248 and T257 each carry phosphothreonine. A phosphoserine mark is found at S261 and S281. Residues 303-328 (NPATAGQSAEKTNNSTANTGDDPSLQ) form a disordered region. S332 is modified (phosphoserine). An SH3 domain is found at 340–403 (MKKQKVKTIF…PSSYTKLLEE (64 aa)). A Phosphothreonine modification is found at T413. 3 positions are modified to phosphoserine: S415, S421, and S423. The segment at 454-516 (ADAAKIPSTS…TNDRSAPIIR (63 aa)) is disordered. A compositionally biased stretch (polar residues) spans 474-485 (ATSTSPSDSNGT). The interval 488 to 516 (PPFLSGENPFATVKLRPTVTNDRSAPIIR) is binds F-actin.

Interacts with RAC1. Binds to F-actin. Interacts with FASLG. In terms of processing, phosphorylated on tyrosine in response to insulin.

It is found in the cytoplasm. The protein localises to the cytoskeleton. In terms of biological role, may function as adapter protein. Involved in the formation of clusters of actin bundles. Plays a role in the reorganization of the actin cytoskeleton in response to bacterial infection. The polypeptide is BAR/IMD domain-containing adapter protein 2-like 1 (Baiap2l1) (Rattus norvegicus (Rat)).